The chain runs to 213 residues: Uridine kinase (213 aa).

15 to 22 (GASASGKS) contributes to the ATP binding site.

Belongs to the uridine kinase family.

The protein resides in the cytoplasm. It carries out the reaction uridine + ATP = UMP + ADP + H(+). The catalysed reaction is cytidine + ATP = CMP + ADP + H(+). Its pathway is pyrimidine metabolism; CTP biosynthesis via salvage pathway; CTP from cytidine: step 1/3. It participates in pyrimidine metabolism; UMP biosynthesis via salvage pathway; UMP from uridine: step 1/1. This is Uridine kinase from Salmonella agona (strain SL483).